Here is a 177-residue protein sequence, read N- to C-terminus: Small ribosomal subunit protein uS4 (177 aa).

The S4 RNA-binding domain maps to 104-168 (RRLQTLVFRK…SPMASESHPE (65 aa)). The tract at residues 157–177 (PNSPMASESHPERTDSVKDAE) is disordered. Basic and acidic residues predominate over residues 165-177 (SHPERTDSVKDAE).

The protein belongs to the universal ribosomal protein uS4 family. As to quaternary structure, part of the 30S ribosomal subunit. Contacts protein S5. The interaction surface between S4 and S5 is involved in control of translational fidelity.

Its function is as follows. One of the primary rRNA binding proteins, it binds directly to 16S rRNA where it nucleates assembly of the body of the 30S subunit. With S5 and S12 plays an important role in translational accuracy. This Methanococcus aeolicus (strain ATCC BAA-1280 / DSM 17508 / OCM 812 / Nankai-3) protein is Small ribosomal subunit protein uS4.